Here is a 767-residue protein sequence, read N- to C-terminus: Protein ROLLING AND ERECT LEAF 2 (767 aa).

3 disordered regions span residues 1–20 (MGCT…CKER), 78–187 (PALA…SEFF), and 201–309 (RELE…SSTV). Composition is skewed to pro residues over residues 81-90 (APTPTPPPPS) and 110-126 (APPP…PPPV). Positions 145 to 155 (SDSSVASPARS) are enriched in low complexity. Basic and acidic residues predominate over residues 201-210 (RELEEEEKAR). Residues 221-232 (EDEVDDDDDERE) show a composition bias toward acidic residues. Basic and acidic residues predominate over residues 255-264 (TRSEEGEMGN).

Highly expressed in young leaves and panicles. Expressed at low levels in roots.

The protein localises to the cell membrane. Functionally, involved in the regulation of leaf shape formation. May function by coordinating the expression of genes associated with leaf and bulliform cell development. The chain is Protein ROLLING AND ERECT LEAF 2 from Oryza sativa subsp. japonica (Rice).